A 276-amino-acid chain; its full sequence is Aliphatic sulfonates import ATP-binding protein SsuB 1 (276 aa).

The disordered stretch occupies residues 1-21 (MSTGNVTTLRRPEAPPSLPAG). The ABC transporter domain occupies 39 to 259 (FSFRNVTKSF…RHGTPEFARL (221 aa)). ATP is bound at residue 71 to 78 (GKSGCGKS).

Belongs to the ABC transporter superfamily. Aliphatic sulfonates importer (TC 3.A.1.17.2) family. In terms of assembly, the complex is composed of two ATP-binding proteins (SsuB), two transmembrane proteins (SsuC) and a solute-binding protein (SsuA).

The protein resides in the cell inner membrane. The enzyme catalyses ATP + H2O + aliphatic sulfonate-[sulfonate-binding protein]Side 1 = ADP + phosphate + aliphatic sulfonateSide 2 + [sulfonate-binding protein]Side 1.. Part of the ABC transporter complex SsuABC involved in aliphatic sulfonates import. Responsible for energy coupling to the transport system. The polypeptide is Aliphatic sulfonates import ATP-binding protein SsuB 1 (Agrobacterium fabrum (strain C58 / ATCC 33970) (Agrobacterium tumefaciens (strain C58))).